A 352-amino-acid chain; its full sequence is Anthranilate phosphoribosyltransferase (352 aa).

5-phospho-alpha-D-ribose 1-diphosphate is bound by residues glycine 83, 86–87 (GD), threonine 91, 93–96 (NIST), 111–119 (KHGGRSVSS), and alanine 123. Glycine 83 contributes to the anthranilate binding site. Residue serine 95 coordinates Mg(2+). Arginine 169 provides a ligand contact to anthranilate. Aspartate 228 and glutamate 229 together coordinate Mg(2+).

This sequence belongs to the anthranilate phosphoribosyltransferase family. As to quaternary structure, homodimer. Requires Mg(2+) as cofactor.

It carries out the reaction N-(5-phospho-beta-D-ribosyl)anthranilate + diphosphate = 5-phospho-alpha-D-ribose 1-diphosphate + anthranilate. It participates in amino-acid biosynthesis; L-tryptophan biosynthesis; L-tryptophan from chorismate: step 2/5. In terms of biological role, catalyzes the transfer of the phosphoribosyl group of 5-phosphorylribose-1-pyrophosphate (PRPP) to anthranilate to yield N-(5'-phosphoribosyl)-anthranilate (PRA). This chain is Anthranilate phosphoribosyltransferase, found in Neisseria meningitidis serogroup C (strain 053442).